Consider the following 332-residue polypeptide: PTS-dependent dihydroxyacetone kinase, dihydroxyacetone-binding subunit DhaK (332 aa).

The 323-residue stretch at 9–331 (QPQDVVSEML…LNEDVKTISW (323 aa)) folds into the DhaK domain. Residues 55 to 58 (GSGH), K106, and D111 each bind dihydroxyacetone. Catalysis depends on H58, which acts as the Proton acceptor. Residue H220 is the Tele-hemiaminal-histidine intermediate of the active site.

As to quaternary structure, homodimer. The dihydroxyacetone kinase complex is composed of a homodimer of DhaM, a homodimer of DhaK and the subunit DhaL.

The enzyme catalyses dihydroxyacetone + phosphoenolpyruvate = dihydroxyacetone phosphate + pyruvate. It participates in polyol metabolism; glycerol degradation. Its function is as follows. Dihydroxyacetone binding subunit of the dihydroxyacetone kinase, which is responsible the phosphoenolpyruvate (PEP)-dependent phosphorylation of dihydroxyacetone via a phosphoryl group transfer from DhaL-ATP. The polypeptide is PTS-dependent dihydroxyacetone kinase, dihydroxyacetone-binding subunit DhaK (Lactococcus lactis subsp. lactis (strain IL1403) (Streptococcus lactis)).